Consider the following 291-residue polypeptide: 3-hydroxy-5-phosphonooxypentane-2,4-dione thiolase (291 aa).

Residue K203 is the Schiff-base intermediate with substrate of the active site.

Belongs to the DeoC/FbaB aldolase family. In terms of assembly, homodecamer.

The protein resides in the cytoplasm. The catalysed reaction is dihydroxyacetone phosphate + acetyl-CoA = 3-hydroxy-2,4-dioxopentyl phosphate + CoA. Its function is as follows. Involved in the degradation of phospho-AI-2, thereby terminating induction of the lsr operon and closing the AI-2 signaling cycle. Catalyzes the transfer of an acetyl moiety from 3-hydroxy-5-phosphonooxypentane-2,4-dione to CoA to form glycerone phosphate and acetyl-CoA. In Escherichia coli O139:H28 (strain E24377A / ETEC), this protein is 3-hydroxy-5-phosphonooxypentane-2,4-dione thiolase.